Consider the following 306-residue polypeptide: uncharacterized protein (306 aa).

The next 9 membrane-spanning stretches (helical) occupy residues Val-13 to Ile-33, Pro-53 to Gly-73, Ile-86 to Ala-106, Val-112 to Leu-132, Trp-147 to Phe-167, Ala-177 to Ile-197, Ala-214 to Ile-234, Val-246 to Phe-268, and Val-272 to Leu-294.

Its subcellular location is the cell membrane. This is an uncharacterized protein from Bacillus subtilis (strain 168).